Reading from the N-terminus, the 355-residue chain is DNA polymerase IV (355 aa).

One can recognise a UmuC domain in the interval 14 to 198 (IIHVDMDAFF…LPVEKFHGVG (185 aa)). Residues Asp-18 and Asp-116 each contribute to the Mg(2+) site. Residue Glu-117 is part of the active site.

This sequence belongs to the DNA polymerase type-Y family. Monomer. It depends on Mg(2+) as a cofactor.

It localises to the cytoplasm. The catalysed reaction is DNA(n) + a 2'-deoxyribonucleoside 5'-triphosphate = DNA(n+1) + diphosphate. Poorly processive, error-prone DNA polymerase involved in untargeted mutagenesis. Copies undamaged DNA at stalled replication forks, which arise in vivo from mismatched or misaligned primer ends. These misaligned primers can be extended by PolIV. Exhibits no 3'-5' exonuclease (proofreading) activity. May be involved in translesional synthesis, in conjunction with the beta clamp from PolIII. This Streptococcus suis (strain 98HAH33) protein is DNA polymerase IV.